The sequence spans 191 residues: Probable DNA-directed RNA polymerase subunit delta (191 aa).

Positions 14–83 (LSMIEVARAI…GENKWGLRSW (70 aa)) constitute an HTH HARE-type domain. The interval 118–191 (DEDAIDYRDD…EDEEDEEPVL (74 aa)) is disordered.

It belongs to the RpoE family. RNAP is composed of a core of 2 alpha, a beta and a beta' subunits. The core is associated with a delta subunit and one of several sigma factors.

Its function is as follows. Participates in both the initiation and recycling phases of transcription. In the presence of the delta subunit, RNAP displays an increased specificity of transcription, a decreased affinity for nucleic acids, and an increased efficiency of RNA synthesis because of enhanced recycling. The sequence is that of Probable DNA-directed RNA polymerase subunit delta from Streptococcus pyogenes serotype M18 (strain MGAS8232).